We begin with the raw amino-acid sequence, 618 residues long: UvrABC system protein C (618 aa).

One can recognise a GIY-YIG domain in the interval 20-98 (TAPGVYRMYA…IKSLSPRYNV (79 aa)). The 36-residue stretch at 207–242 (DQLGEEIMQSMQQASEALEFERAARLRDLLSSLRSM) folds into the UVR domain.

This sequence belongs to the UvrC family. In terms of assembly, interacts with UvrB in an incision complex.

It is found in the cytoplasm. In terms of biological role, the UvrABC repair system catalyzes the recognition and processing of DNA lesions. UvrC both incises the 5' and 3' sides of the lesion. The N-terminal half is responsible for the 3' incision and the C-terminal half is responsible for the 5' incision. This is UvrABC system protein C from Xanthomonas oryzae pv. oryzae (strain MAFF 311018).